A 324-amino-acid polypeptide reads, in one-letter code: Beta-ketoacyl-[acyl-carrier-protein] synthase III (324 aa).

Residues Cys114 and His251 contribute to the active site. The interval 252–256 (QANKR) is ACP-binding. Asn281 is an active-site residue.

It belongs to the thiolase-like superfamily. FabH family. Homodimer.

It is found in the cytoplasm. It catalyses the reaction malonyl-[ACP] + acetyl-CoA + H(+) = 3-oxobutanoyl-[ACP] + CO2 + CoA. The protein operates within lipid metabolism; fatty acid biosynthesis. In terms of biological role, catalyzes the condensation reaction of fatty acid synthesis by the addition to an acyl acceptor of two carbons from malonyl-ACP. Catalyzes the first condensation reaction which initiates fatty acid synthesis and may therefore play a role in governing the total rate of fatty acid production. Possesses both acetoacetyl-ACP synthase and acetyl transacylase activities. Its substrate specificity determines the biosynthesis of branched-chain and/or straight-chain of fatty acids. The chain is Beta-ketoacyl-[acyl-carrier-protein] synthase III from Bradyrhizobium sp. (strain BTAi1 / ATCC BAA-1182).